A 759-amino-acid chain; its full sequence is Pseudocleavage protein nop-1 (759 aa).

Disordered stretches follow at residues 1 to 46 (MSAP…SSIF), 334 to 361 (KIFP…MDKK), 379 to 413 (LSVN…NLSQ), 440 to 495 (QSSR…KKER), and 732 to 759 (ESDG…GAKI). Basic and acidic residues predominate over residues 10-42 (DIHSDDRDHADHQTKKEKHWFEEKSEQNGENRR). The span at 448–465 (TGNSSISSGVGSIASGTS) shows a compositional bias: low complexity. Over residues 473–482 (GSRSGQSISR) the composition is skewed to polar residues. Basic and acidic residues predominate over residues 485-495 (SRRDDEGKKER). Polar residues predominate over residues 736 to 759 (PASSNDDFDTQSTASTSTVFGAKI).

Its subcellular location is the nucleus. It localises to the cytoplasm. The protein localises to the cell cortex. It is found in the cleavage furrow. Functionally, required for formation of the pseudocleavage furrow during the first cleavage of the embryo and also mediates aster-induced furrowing during cytokinesis. Promotes cortical recruitment of ani-1 and nmy-2 during pseudocleavage and cytokinesis and promotes the accumulation of actin at furrowing regions. Regulates establishment of embryonic cell polarity. This chain is Pseudocleavage protein nop-1 (nop-1), found in Caenorhabditis elegans.